Reading from the N-terminus, the 1116-residue chain is Cation channel sperm-associated auxiliary subunit beta (1116 aa).

Residues M1–P1053 are Extracellular-facing. A disulfide bridge links C35 with C60. Residues N90, N100, N118, N226, and N321 are each glycosylated (N-linked (GlcNAc...) asparagine). Residues C189 and C302 are joined by a disulfide bond. A disulfide bridge links C330 with C343. Residues N618 and N690 are each glycosylated (N-linked (GlcNAc...) asparagine). 4 cysteine pairs are disulfide-bonded: C718–C816, C829–C1037, C911–C920, and C922–C937. N-linked (GlcNAc...) asparagine glycans are attached at residues N913 and N921. N-linked (GlcNAc...) asparagine glycans are attached at residues N1010 and N1015. Residues F1054–F1076 form a helical membrane-spanning segment. Residues M1077–E1116 lie on the Cytoplasmic side of the membrane.

Component of the CatSper complex or CatSpermasome composed of the core pore-forming members CATSPER1, CATSPER2, CATSPER3 and CATSPER4 as well as auxiliary members CATSPERB, CATSPERG, CATSPERD, CATSPERE, CATSPERZ, C2CD6/CATSPERT, TMEM249, TMEM262 and EFCAB9. HSPA1 may be an additional auxiliary complex member. The core complex members CATSPER1, CATSPER2, CATSPER3 and CATSPER4 form a heterotetrameric channel. The auxiliary CATSPERB, CATSPERG, CATSPERD and CATSPERE subunits form a pavilion-like structure over the pore which stabilizes the complex through interactions with CATSPER4, CATSPER3, CATSPER1 and CATSPER2 respectively. TMEM262/CATSPERH interacts with CATSPERB, further stabilizing the complex. C2CD6/CATSPERT interacts at least with CATSPERD and is required for targeting the CatSper complex in the flagellar membrane.

The protein resides in the cell projection. It is found in the cilium. It localises to the flagellum membrane. Auxiliary component of the CatSper complex, a complex involved in sperm cell hyperactivation. Sperm cell hyperactivation is needed for sperm motility which is essential late in the preparation of sperm for fertilization. The chain is Cation channel sperm-associated auxiliary subunit beta from Homo sapiens (Human).